Consider the following 235-residue polypeptide: UPF0714 protein YmaC (235 aa).

The helical transmembrane segment at 5-24 (LLNVILVLAIVLFLRYVHYS) threads the bilayer.

Belongs to the UPF0714 family.

It is found in the cell membrane. The chain is UPF0714 protein YmaC (ymaC) from Bacillus subtilis (strain 168).